The sequence spans 489 residues: Betaine aldehyde dehydrogenase (489 aa).

Residues threonine 26 and aspartate 93 each coordinate K(+). 150 to 152 (GAW) lines the NAD(+) pocket. The active-site Charge relay system is the lysine 162. An NAD(+)-binding site is contributed by 176–179 (KPSE). Valine 180 is a K(+) binding site. 229 to 232 (GVET) serves as a coordination point for NAD(+). Leucine 245 is a K(+) binding site. Glutamate 251 functions as the Proton acceptor in the catalytic mechanism. 3 residues coordinate NAD(+): glycine 253, cysteine 285, and glutamate 386. Residue cysteine 285 is the Nucleophile of the active site. At cysteine 285 the chain carries Cysteine sulfenic acid (-SOH). K(+)-binding residues include lysine 456 and glycine 459. Catalysis depends on glutamate 463, which acts as the Charge relay system.

It belongs to the aldehyde dehydrogenase family. In terms of assembly, dimer of dimers. The cofactor is K(+).

The enzyme catalyses betaine aldehyde + NAD(+) + H2O = glycine betaine + NADH + 2 H(+). It functions in the pathway amine and polyamine biosynthesis; betaine biosynthesis via choline pathway; betaine from betaine aldehyde: step 1/1. Its function is as follows. Involved in the biosynthesis of the osmoprotectant glycine betaine. Catalyzes the irreversible oxidation of betaine aldehyde to the corresponding acid. This is Betaine aldehyde dehydrogenase from Paraburkholderia phymatum (strain DSM 17167 / CIP 108236 / LMG 21445 / STM815) (Burkholderia phymatum).